Here is a 65-residue protein sequence, read N- to C-terminus: Stress-associated endoplasmic reticulum protein 2 (65 aa).

The chain crosses the membrane as a helical span at residues 38-58; the sequence is GPWLLALFVFVVCGSAIFQII.

The protein belongs to the RAMP4 family. As to quaternary structure, interacts with SEC61B, SEC61A1 and the SEC61 complex. Interacts with CANX.

Its subcellular location is the membrane. The protein resides in the endoplasmic reticulum membrane. In terms of biological role, interacts with target proteins during their translocation into the lumen of the endoplasmic reticulum. Protects unfolded target proteins against degradation during ER stress. May facilitate glycosylation of target proteins after termination of ER stress. May modulate the use of N-glycosylation sites on target proteins. This is Stress-associated endoplasmic reticulum protein 2 (SERP2) from Bos taurus (Bovine).